A 102-amino-acid polypeptide reads, in one-letter code: Large ribosomal subunit protein bL21 (102 aa).

Belongs to the bacterial ribosomal protein bL21 family. In terms of assembly, part of the 50S ribosomal subunit. Contacts protein L20.

Its function is as follows. This protein binds to 23S rRNA in the presence of protein L20. In Ehrlichia ruminantium (strain Gardel), this protein is Large ribosomal subunit protein bL21.